The following is a 347-amino-acid chain: BSD domain-containing protein C22A12.14c (347 aa).

Residues threonine 123 and threonine 125 each carry the phosphothreonine modification. In terms of domain architecture, BSD spans 167 to 219; the sequence is WEKEISIDGKTEEISLLLEEYPDLRKQMESLVPSEVSYDDFWKRFFWHKEVVQ. Residues 229–347 are disordered; sequence DEEEIFSWGD…DDDEDDDDWE (119 aa). Phosphoserine occurs at positions 235, 241, and 246. The span at 240–251 shows a compositional bias: acidic residues; the sequence is RSDEEESDNEQV. The span at 297-312 shows a compositional bias: basic and acidic residues; the sequence is HDGEVDGEVKEEEENK. The span at 313 to 325 shows a compositional bias: low complexity; it reads VSSSSNIEASQSS. Residues 327–337 show a composition bias toward basic and acidic residues; that stretch reads EVKDEANRKVD. Over residues 338 to 347 the composition is skewed to acidic residues; sequence DDDEDDDDWE.

Its subcellular location is the cytoplasm. This chain is BSD domain-containing protein C22A12.14c, found in Schizosaccharomyces pombe (strain 972 / ATCC 24843) (Fission yeast).